The sequence spans 355 residues: tRNA (guanine-N(1)-)-methyltransferase (355 aa).

S-adenosyl-L-methionine-binding positions include Gly109 and 129–134; that span reads IGDYVL.

The protein belongs to the RNA methyltransferase TrmD family. Homodimer.

The protein localises to the cytoplasm. The catalysed reaction is guanosine(37) in tRNA + S-adenosyl-L-methionine = N(1)-methylguanosine(37) in tRNA + S-adenosyl-L-homocysteine + H(+). Functionally, specifically methylates guanosine-37 in various tRNAs. This Chlamydia caviae (strain ATCC VR-813 / DSM 19441 / 03DC25 / GPIC) (Chlamydophila caviae) protein is tRNA (guanine-N(1)-)-methyltransferase.